Consider the following 644-residue polypeptide: Exoribonuclease 2 (644 aa).

The region spanning 189 to 516 is the RNB domain; that stretch reads REDLTALDFV…NHRLLKAIIK (328 aa). The region spanning 561–643 is the S1 motif domain; it reads DSRFAAEIID…ETRSVIARPV (83 aa).

Belongs to the RNR ribonuclease family. RNase II subfamily.

Its subcellular location is the cytoplasm. It catalyses the reaction Exonucleolytic cleavage in the 3'- to 5'-direction to yield nucleoside 5'-phosphates.. Its function is as follows. Involved in mRNA degradation. Hydrolyzes single-stranded polyribonucleotides processively in the 3' to 5' direction. The protein is Exoribonuclease 2 of Cronobacter sakazakii (strain ATCC BAA-894) (Enterobacter sakazakii).